The chain runs to 305 residues: Mycothiol acetyltransferase (305 aa).

N-acetyltransferase domains follow at residues 10 to 154 (DRLD…VVLE) and 156 to 305 (ISLR…YARA). 1D-myo-inositol 2-(L-cysteinylamino)-2-deoxy-alpha-D-glucopyranoside is bound at residue E38. 82 to 84 (LAV) serves as a coordination point for acetyl-CoA. Residues E183, K225, and E238 each contribute to the 1D-myo-inositol 2-(L-cysteinylamino)-2-deoxy-alpha-D-glucopyranoside site. Residues 242–244 (VAI) and 249–255 (QGRGLGR) each bind acetyl-CoA. Y276 lines the 1D-myo-inositol 2-(L-cysteinylamino)-2-deoxy-alpha-D-glucopyranoside pocket. An acetyl-CoA-binding site is contributed by 281–286 (NASALH).

Belongs to the acetyltransferase family. MshD subfamily. Monomer.

The enzyme catalyses 1D-myo-inositol 2-(L-cysteinylamino)-2-deoxy-alpha-D-glucopyranoside + acetyl-CoA = mycothiol + CoA + H(+). In terms of biological role, catalyzes the transfer of acetyl from acetyl-CoA to desacetylmycothiol (Cys-GlcN-Ins) to form mycothiol. The polypeptide is Mycothiol acetyltransferase (Rhodococcus opacus (strain B4)).